A 167-amino-acid polypeptide reads, in one-letter code: MKLILRADVENLGRLGDVVTVKPGFGRNFLLPQGLAMLASDANLKAFELERKKLQAKMDALRTAASDLSAKIAATELVIPVRVGENDKLYGSVTTAIIGDALAEKGVDIDRRRILLDAAIRTLGTHEVRVRLHADVVATLNVKVVAEDKVSDAAEPVVEAEPETPAE.

It belongs to the bacterial ribosomal protein bL9 family.

Functionally, binds to the 23S rRNA. This Nitratidesulfovibrio vulgaris (strain DSM 19637 / Miyazaki F) (Desulfovibrio vulgaris) protein is Large ribosomal subunit protein bL9.